The following is a 34-amino-acid chain: Subtilosin-A (34 aa).

Positions Asn1 to Gly34 form a cross-link, cyclopeptide (Asn-Gly). A cross-link (2-cysteinyl-D-allo-threonine (Cys-Thr)) is located at residues Cys7–Thr28. The segment at residues Cys13–Phe22 is a cross-link (2-cysteinyl-L-phenylalanine (Cys-Phe)).

The protein belongs to the bacteriocin class V family. In terms of processing, alpha-amino of Asn-1 is covalently linked with the carboxyl of Gly-34 to form a cyclopeptide. Thioether cross-links are formed between cysteines and the alpha-carbons of other amino acids, Cys-7 to Thr-28 and Cys-13 to Phe-22. In forming this cross-link, Thr-28 is converted to D-amino acid.

It localises to the secreted. In terms of biological role, has bactericidal activity against some Gram-positive bacteria. The polypeptide is Subtilosin-A (Cytobacillus firmus (Bacillus firmus)).